Consider the following 938-residue polypeptide: Myocardin (938 aa).

The MEF2C-binding signature appears at 12–27 (IRSKFRSVLQLRLQQR). An RPEL 1 repeat occupies 18–43 (SVLQLRLQQRRTQEQLANQGIIPPLK). A compositionally biased stretch (basic and acidic residues) spans 48–61 (FHEQRKHLDSDKAK). The segment at 48–68 (FHEQRKHLDSDKAKNSLKRKA) is disordered. RPEL repeat units lie at residues 62–87 (NSLK…QAST) and 106–131 (DDLN…PVDS). The HDAC5-binding stretch occupies residues 153–205 (FEEDSSSDGLSPDQTRSEDPQNSAGSPPDAKASDTPSTGSLGTNQDLASGSEN). A disordered region spans residues 154 to 281 (EEDSSSDGLS…DQKAEKSPPP (128 aa)). Polar residues-rich tracts occupy residues 159–177 (SDGL…NSAG), 186–203 (DTPS…ASGS), and 210–220 (SASQPSHQSDA). Residues 248–265 (NRHKKPKDPKPKVKKLKY) show a composition bias toward basic residues. The SAP domain maps to 371 to 405 (LDDLKVSELRQQLRIRGLPVSGTKTALMDRLRPFQ). 4 positions are modified to phosphoserine; by GSK3-beta: serine 451, serine 455, serine 459, and serine 463. Residues 516 to 561 (EKDKMLVEKQKVINELTWKLQQEQRQVEELRMQLQKQKRNNCSEKK) are a coiled coil. Phosphoserine; by GSK3-beta is present on residues serine 626, serine 630, serine 634, and serine 638. Disordered stretches follow at residues 635–678 (PQHS…SSPI) and 693–734 (SDKV…MTRS). Low complexity predominate over residues 699-715 (KFSIPSPTFSKSSSAIS). The segment at 717 to 938 (VTQPPSYEDA…SSMDLHLQQW (222 aa)) is required for interaction with and ubiquitination by STUB1. A phosphoserine; by MAPK1 and MAPK3 mark is found at serine 815, serine 862, and serine 869. Threonine 896 is subject to Phosphothreonine; by MAPK1 and MAPK3.

In terms of assembly, homodimer. Interacts with SRF, its association does not depend on specific DNA sequences for ternary complex formation. Interacts with MLLT7/FOXO4. Interacts (via C-terminal) with EP300 (via the CREB-binding domain). Interacts with HDAC4 and HDAC5. Interacts with MEF2C. Interacts (via C-terminus) with STUB1/CHIP. Interacts with PURB. In terms of processing, ubiquitinated; by STUB1/CHIP at the C-terminus, leading to its degradation by the proteasome. Phosphorylation by GSK3B is required for STUB1/CHIP-mediated ubiquitination. Phosphorylation negatively regulates the intrinsic myocardin transcriptional activity. Phosphorylated; by GSK3B. Expressed in the heart, aorta and bladder. Expressed in smooth muscle cell-containing tissues: stomach, small intestine, colon, lung, placenta and uterus. Very faint expression in prostate and skeletal muscle.

The protein localises to the nucleus. In terms of biological role, smooth muscle cells (SM) and cardiac muscle cells-specific transcriptional factor which uses the canonical single or multiple CArG boxes DNA sequence. Acts as a cofactor of serum response factor (SRF) with the potential to modulate SRF-target genes. Plays a crucial role in cardiogenesis, urinary bladder development, and differentiation of the smooth muscle cell lineage (myogenesis). Positively regulates the transcription of genes involved in vascular smooth muscle contraction. In Homo sapiens (Human), this protein is Myocardin (MYOCD).